A 335-amino-acid polypeptide reads, in one-letter code: MAAFADRPTCRVSLGAVFLARELHRLRKSLPLCVFSLFLFSFAFSALSGAPSQFAEAAMPKLSGEKLAELMQMDVKDIKERMLALFDLIDTNQDNTIDTEEAKEWSAKLKNAMHQHQVRMEFQAIDKDNDGKVSLSELEATYVDSLDQKQLEQHKKEVEQRFKTVDKDNDGLLDLSEIRILMDPGKDEGLMKIEIEEILNAQDKNGDRKITVTEFIETEGTGSLNDVEKTELEKEFKSYDLNADGAIDVEELQQIIKDPHSHEIRMLLEEFTKDLKDGKVGREQWEKEFESFAVSMLTDNGEVLRFPEDYSGIEFPFKTAVPQVDVDDEDKHDEL.

Residues 30–50 (LPLCVFSLFLFSFAFSALSGA) form a helical membrane-spanning segment. 4 EF-hand domains span residues 113-148 (MHQH…SLDQ), 153-188 (QHKK…GKDE), 190-225 (LMKI…GSLN), and 227-262 (VEKT…PHSH). 18 residues coordinate Ca(2+): aspartate 126, aspartate 128, aspartate 130, lysine 132, glutamate 137, aspartate 166, aspartate 168, aspartate 170, glutamate 177, aspartate 203, asparagine 205, aspartate 207, lysine 209, glutamate 214, aspartate 240, asparagine 242, aspartate 244, and glutamate 251. The short motif at 332–335 (HDEL) is the Prevents secretion from ER element.

The protein resides in the endoplasmic reticulum membrane. It is found in the cytoplasm. The protein localises to the cytosol. Functionally, calcium-binding protein. Participates in the efflux of intracellular Ca(2+) and storage of Ca(2+) in the endoplasmic reticulum. Required for gliding, host cell invasion and egress. Required for microneme secretion. This is Calcium-binding protein TgpCaBP from Toxoplasma gondii.